Consider the following 71-residue polypeptide: Small ribosomal subunit protein eS31 (71 aa).

The Zn(2+) site is built by cysteine 35, cysteine 38, cysteine 53, and cysteine 56. The segment at 35 to 56 (CPKCGAGVFMAEHLNRYACGKC) adopts a C4-type zinc-finger fold.

The protein belongs to the eukaryotic ribosomal protein eS31 family. As to quaternary structure, part of the 30S ribosomal subunit. The cofactor is Zn(2+).

This is Small ribosomal subunit protein eS31 from Methanococcus vannielii (strain ATCC 35089 / DSM 1224 / JCM 13029 / OCM 148 / SB).